A 467-amino-acid polypeptide reads, in one-letter code: Glutamyl-tRNA reductase (467 aa).

Substrate is bound by residues 49 to 52 (TCNR), Ser-109, 114 to 116 (EQQ), and Gln-120. Cys-50 functions as the Nucleophile in the catalytic mechanism. 189–194 (GAGAMG) is a binding site for NADP(+). The segment at 446–467 (GFSDTTRYGTSPAQSSSKYHAE) is disordered. Over residues 447-467 (FSDTTRYGTSPAQSSSKYHAE) the composition is skewed to polar residues.

Belongs to the glutamyl-tRNA reductase family. As to quaternary structure, homodimer.

It catalyses the reaction (S)-4-amino-5-oxopentanoate + tRNA(Glu) + NADP(+) = L-glutamyl-tRNA(Glu) + NADPH + H(+). Its pathway is porphyrin-containing compound metabolism; protoporphyrin-IX biosynthesis; 5-aminolevulinate from L-glutamyl-tRNA(Glu): step 1/2. Catalyzes the NADPH-dependent reduction of glutamyl-tRNA(Glu) to glutamate 1-semialdehyde (GSA). This is Glutamyl-tRNA reductase from Mycobacterium leprae (strain TN).